The sequence spans 113 residues: uncharacterized protein (113 aa).

Positions 1-20 are cleaved as a signal peptide; it reads MMKKSILAFLLLTSSAAALA.

This is an uncharacterized protein from Escherichia coli (strain K12).